The primary structure comprises 429 residues: C4-dicarboxylate transport protein (429 aa).

The next 8 helical transmembrane spans lie at 9–29, 45–65, 79–99, 149–169, 185–205, 223–243, 308–328, and 356–376; these read VLYV…HYYP, LIKM…IAGM, LLYF…ATHI, GEIL…AHLG, VLFG…FGAM, LIGT…GAIA, IYMT…LTWM, and AATL…ILGI.

The protein belongs to the dicarboxylate/amino acid:cation symporter (DAACS) (TC 2.A.23) family.

Its subcellular location is the cell inner membrane. Its function is as follows. Responsible for the transport of dicarboxylates such as succinate, fumarate, and malate from the periplasm across the membrane. This Burkholderia multivorans (strain ATCC 17616 / 249) protein is C4-dicarboxylate transport protein.